The primary structure comprises 348 residues: Rhodopsin (348 aa).

Met-1 carries the post-translational modification N-acetylmethionine. The Extracellular portion of the chain corresponds to 1–36; the sequence is MNGTEGPNFYVPFSNATGVVRSPFEYPQYYLAEPWQ. 2 N-linked (GlcNAc...) asparagine glycosylation sites follow: Asn-2 and Asn-15. Residues 37-61 form a helical membrane-spanning segment; it reads FSMLAAYMFLLIVLGFPINFLTLYV. The Cytoplasmic segment spans residues 62–73; the sequence is TVQHKKLRTPLN. The helical transmembrane segment at 74–96 threads the bilayer; sequence YILLNLAVADLFMVLGGFTSTLY. At 97-110 the chain is on the extracellular side; sequence TSLHGYFVFGPTGC. The cysteines at positions 110 and 187 are disulfide-linked. Residues 111–133 form a helical membrane-spanning segment; the sequence is NLEGFFATLGGEIALWSLVVLAI. The short motif at 134–136 is the 'Ionic lock' involved in activated form stabilization element; it reads ERY. At 134-152 the chain is on the cytoplasmic side; it reads ERYVVVCKPMSNFRFGENH. Residues 153 to 173 traverse the membrane as a helical segment; the sequence is AIMGVAFTWVMALACAAPPLA. Topologically, residues 174-202 are extracellular; that stretch reads GWSRYIPEGLQCSCGIDYYTLKPEVNNES. Glu-201 provides a ligand contact to Zn(2+). The chain crosses the membrane as a helical span at residues 203–224; sequence FVIYMFVVHFTIPMIIIFFCYG. Residues 225 to 252 lie on the Cytoplasmic side of the membrane; sequence QLVFTVKEAAAQQQESATTQKAEKEVTR. The chain crosses the membrane as a helical span at residues 253–274; the sequence is MVIIMVIAFLICWVPYASVAFY. Residues 275-284 are Extracellular-facing; that stretch reads IFTHQGSNFG. Gln-279 is a binding site for Zn(2+). A helical transmembrane segment spans residues 285 to 309; the sequence is PIFMTIPAFFAKSAAIYNPVIYIMM. At Lys-296 the chain carries N6-(retinylidene)lysine. Residues 310-348 are Cytoplasmic-facing; it reads NKQFRNCMLTTICCGKNPLGDDEASATVSKTETSQVAPA. 2 S-palmitoyl cysteine lipidation sites follow: Cys-322 and Cys-323. The tract at residues 330 to 348 is interaction with SAG; the sequence is DDEASATVSKTETSQVAPA. At Ser-334 the chain carries Phosphoserine. Thr-336 is subject to Phosphothreonine. A Phosphoserine modification is found at Ser-338. 2 positions are modified to phosphothreonine: Thr-340 and Thr-342. Ser-343 carries the post-translational modification Phosphoserine.

Belongs to the G-protein coupled receptor 1 family. Opsin subfamily. In terms of assembly, homodimer. May form a complex composed of RHO, GRK1 and RCVRN in a Ca(2+)-dependent manner; RCVRN prevents the interaction between GRK1 and RHO. Interacts with GRK1. Interacts (phosphorylated form) with SAG. Interacts with GNAT1. Interacts with GNAT3. SAG and G-proteins compete for a common binding site. Interacts with PRCD; the interaction promotes PRCD stability. Forms a complex with ASAP1 and ARF4. Forms a complex with ASAP1, RAB11A, Rabin8/RAB3IP, ARF4 and RAB11FIP3; the complex regulates Golgi-to-cilia rhodopsin/RHO transport in photoreceptors. Phosphorylated on some or all of the serine and threonine residues present in the C-terminal region. After activation by light, phosphorylated by GRK1 (in vitro). Post-translationally, contains one covalently linked retinal chromophore. Upon light absorption, the covalently bound 11-cis-retinal is converted to all-trans-retinal. After hydrolysis of the Schiff base and release of the covalently bound all-trans-retinal, active rhodopsin is regenerated by binding of a fresh molecule of 11-cis-retinal. In terms of tissue distribution, rod shaped photoreceptor cells which mediate vision in dim light.

Its subcellular location is the membrane. It is found in the cell projection. The protein resides in the cilium. The protein localises to the photoreceptor outer segment. Functionally, photoreceptor required for image-forming vision at low light intensity. Required for photoreceptor cell viability after birth. Light-induced isomerization of the chromophore 11-cis-retinal to all-trans-retinal triggers a conformational change that activates signaling via G-proteins. Subsequent receptor phosphorylation mediates displacement of the bound G-protein alpha subunit by the arrestin SAG and terminates signaling. This chain is Rhodopsin (RHO), found in Homo sapiens (Human).